The sequence spans 317 residues: Transaldolase (317 aa).

Lys132 functions as the Schiff-base intermediate with substrate in the catalytic mechanism.

The protein belongs to the transaldolase family. Type 1 subfamily. Homodimer.

The protein localises to the cytoplasm. It catalyses the reaction D-sedoheptulose 7-phosphate + D-glyceraldehyde 3-phosphate = D-erythrose 4-phosphate + beta-D-fructose 6-phosphate. The protein operates within carbohydrate degradation; pentose phosphate pathway; D-glyceraldehyde 3-phosphate and beta-D-fructose 6-phosphate from D-ribose 5-phosphate and D-xylulose 5-phosphate (non-oxidative stage): step 2/3. Its function is as follows. Transaldolase is important for the balance of metabolites in the pentose-phosphate pathway. In Edwardsiella ictaluri (strain 93-146), this protein is Transaldolase.